A 713-amino-acid polypeptide reads, in one-letter code: KNR4/SMI1 homolog (713 aa).

Disordered regions lie at residues 18 to 129, 255 to 274, 400 to 457, and 500 to 713; these read PDRY…VTRD, IFIN…SPVA, RHQM…SKPA, and EPLE…KGKK. A compositionally biased stretch (low complexity) spans 22-34; that stretch reads ASQQRSSKASQSA. Polar residues predominate over residues 35–65; sequence GANSQNRPLYNNDDNQSEMYQASSSYTGGYT. Composition is skewed to low complexity over residues 66–81 and 88–103; these read NSPS…GAAA and SSRN…SSTS. A compositionally biased stretch (polar residues) spans 260-270; it reads NAGSPNSSTPG. The span at 400–412 shows a compositional bias: basic and acidic residues; sequence RHQMQRREHERRQ. Over residues 413 to 429 the composition is skewed to low complexity; it reads AAAAAQQQQQQQQHHAQ. 2 stretches are compositionally biased toward basic and acidic residues: residues 507–605 and 613–662; these read EIKG…EEQK and AKAE…KIDE. Acidic residues predominate over residues 663-686; the sequence is ENGNAEEADEEADDDDEDDEEEGD. Over residues 701 to 713 the composition is skewed to basic residues; that stretch reads SKSKKKNKKKGKK.

It belongs to the KNR4/SMI1 family.

The protein is KNR4/SMI1 homolog of Yarrowia lipolytica (strain CLIB 122 / E 150) (Yeast).